The primary structure comprises 591 residues: Aspartate--tRNA(Asp/Asn) ligase (591 aa).

Residue glutamate 175 participates in L-aspartate binding. The aspartate stretch occupies residues 199 to 202; sequence QQFK. L-aspartate contacts are provided by arginine 221 and histidine 453. 221 to 223 contributes to the ATP binding site; it reads RDE. ATP is bound at residue glutamate 486. An L-aspartate-binding site is contributed by arginine 493. 538 to 541 contributes to the ATP binding site; that stretch reads GIDR.

The protein belongs to the class-II aminoacyl-tRNA synthetase family. Type 1 subfamily. As to quaternary structure, homodimer.

The protein localises to the cytoplasm. The enzyme catalyses tRNA(Asx) + L-aspartate + ATP = L-aspartyl-tRNA(Asx) + AMP + diphosphate. Its function is as follows. Aspartyl-tRNA synthetase with relaxed tRNA specificity since it is able to aspartylate not only its cognate tRNA(Asp) but also tRNA(Asn). Reaction proceeds in two steps: L-aspartate is first activated by ATP to form Asp-AMP and then transferred to the acceptor end of tRNA(Asp/Asn). The sequence is that of Aspartate--tRNA(Asp/Asn) ligase from Jannaschia sp. (strain CCS1).